A 150-amino-acid chain; its full sequence is Ribosome maturation factor RimP (150 aa).

It belongs to the RimP family.

Its subcellular location is the cytoplasm. Its function is as follows. Required for maturation of 30S ribosomal subunits. The polypeptide is Ribosome maturation factor RimP (Escherichia coli O9:H4 (strain HS)).